We begin with the raw amino-acid sequence, 347 residues long: Aspartate-semialdehyde dehydrogenase (347 aa).

NADP(+)-binding positions include 13 to 16 (TGAV) and 41 to 42 (RS). R101 serves as a coordination point for phosphate. The Acyl-thioester intermediate role is filled by C132. Substrate is bound at residue Q159. 162 to 163 (SG) contributes to the NADP(+) binding site. K216 contributes to the phosphate binding site. R238 serves as a coordination point for substrate. H245 acts as the Proton acceptor in catalysis. N319 lines the NADP(+) pocket.

It belongs to the aspartate-semialdehyde dehydrogenase family. Homodimer.

It catalyses the reaction L-aspartate 4-semialdehyde + phosphate + NADP(+) = 4-phospho-L-aspartate + NADPH + H(+). It participates in amino-acid biosynthesis; L-lysine biosynthesis via DAP pathway; (S)-tetrahydrodipicolinate from L-aspartate: step 2/4. It functions in the pathway amino-acid biosynthesis; L-methionine biosynthesis via de novo pathway; L-homoserine from L-aspartate: step 2/3. Its pathway is amino-acid biosynthesis; L-threonine biosynthesis; L-threonine from L-aspartate: step 2/5. Its function is as follows. Catalyzes the NADPH-dependent formation of L-aspartate-semialdehyde (L-ASA) by the reductive dephosphorylation of L-aspartyl-4-phosphate. In Legionella pneumophila, this protein is Aspartate-semialdehyde dehydrogenase.